The primary structure comprises 126 residues: Protein Wnt-1 (126 aa).

Ser1 carries O-palmitoleoyl serine; by PORCN lipidation. Cys92 and Cys107 form a disulfide bridge. 2 N-linked (GlcNAc...) asparagine glycosylation sites follow: Asn93 and Asn123.

This sequence belongs to the Wnt family. Post-translationally, palmitoleoylation is required for efficient binding to frizzled receptors. Palmitoleoylation is necessary for proper trafficking to cell surface. Depalmitoleoylated by NOTUM, leading to inhibit Wnt signaling pathway.

The protein localises to the secreted. It localises to the extracellular space. Its subcellular location is the extracellular matrix. Ligand for members of the frizzled family of seven transmembrane receptors. Acts in the canonical Wnt signaling pathway by promoting beta-catenin-dependent transcriptional activation. Plays an essential role in the development of the embryonic brain and central nervous system (CNS). Has a role in osteoblast function, bone development and bone homeostasis. This Plestiodon skiltonianus (Western skink) protein is Protein Wnt-1 (WNT-1).